The primary structure comprises 172 residues: Adenine phosphoribosyltransferase (172 aa).

Belongs to the purine/pyrimidine phosphoribosyltransferase family. Homodimer.

The protein localises to the cytoplasm. It catalyses the reaction AMP + diphosphate = 5-phospho-alpha-D-ribose 1-diphosphate + adenine. It participates in purine metabolism; AMP biosynthesis via salvage pathway; AMP from adenine: step 1/1. Its function is as follows. Catalyzes a salvage reaction resulting in the formation of AMP, that is energically less costly than de novo synthesis. The chain is Adenine phosphoribosyltransferase from Synechococcus sp. (strain CC9311).